The chain runs to 151 residues: UPF0178 protein PFL_5989 (151 aa).

It belongs to the UPF0178 family.

In Pseudomonas fluorescens (strain ATCC BAA-477 / NRRL B-23932 / Pf-5), this protein is UPF0178 protein PFL_5989.